Consider the following 133-residue polypeptide: ATP synthase epsilon chain (133 aa).

This sequence belongs to the ATPase epsilon chain family. As to quaternary structure, F-type ATPases have 2 components, CF(1) - the catalytic core - and CF(0) - the membrane proton channel. CF(1) has five subunits: alpha(3), beta(3), gamma(1), delta(1), epsilon(1). CF(0) has three main subunits: a, b and c.

Its subcellular location is the cell membrane. Functionally, produces ATP from ADP in the presence of a proton gradient across the membrane. This Clostridium botulinum (strain 657 / Type Ba4) protein is ATP synthase epsilon chain.